We begin with the raw amino-acid sequence, 545 residues long: Chaperonin GroEL 2 (545 aa).

ATP contacts are provided by residues threonine 29–proline 32, aspartate 86–threonine 90, glycine 413, aspartate 477–alanine 479, and aspartate 493. Residues proline 526–phenylalanine 545 form a disordered region. The span at glycine 534–phenylalanine 545 shows a compositional bias: basic residues.

It belongs to the chaperonin (HSP60) family. In terms of assembly, forms a cylinder of 14 subunits composed of two heptameric rings stacked back-to-back. Interacts with the co-chaperonin GroES.

The protein localises to the cytoplasm. It catalyses the reaction ATP + H2O + a folded polypeptide = ADP + phosphate + an unfolded polypeptide.. Functionally, together with its co-chaperonin GroES, plays an essential role in assisting protein folding. The GroEL-GroES system forms a nano-cage that allows encapsulation of the non-native substrate proteins and provides a physical environment optimized to promote and accelerate protein folding. The polypeptide is Chaperonin GroEL 2 (Salinispora arenicola (strain CNS-205)).